Here is a 186-residue protein sequence, read N- to C-terminus: Protein Syd (186 aa).

The protein belongs to the Syd family.

It localises to the cell inner membrane. Functionally, interacts with the SecY protein in vivo. May bind preferentially to an uncomplexed state of SecY, thus functioning either as a chelating agent for excess SecY in the cell or as a regulatory factor that negatively controls the translocase function. The sequence is that of Protein Syd from Erwinia tasmaniensis (strain DSM 17950 / CFBP 7177 / CIP 109463 / NCPPB 4357 / Et1/99).